Consider the following 523-residue polypeptide: 2-isopropylmalate synthase (523 aa).

A Pyruvate carboxyltransferase domain is found at 5 to 267 (VIIFDTTLRD…HTAINHQEIW (263 aa)). The Mn(2+) site is built by Asp-14, His-202, His-204, and Asn-238. The tract at residues 392 to 523 (RLDYFSVQSG…QHNENNKETV (132 aa)) is regulatory domain.

The protein belongs to the alpha-IPM synthase/homocitrate synthase family. LeuA type 1 subfamily. As to quaternary structure, homodimer. Mn(2+) serves as cofactor.

The protein localises to the cytoplasm. It carries out the reaction 3-methyl-2-oxobutanoate + acetyl-CoA + H2O = (2S)-2-isopropylmalate + CoA + H(+). It functions in the pathway amino-acid biosynthesis; L-leucine biosynthesis; L-leucine from 3-methyl-2-oxobutanoate: step 1/4. In terms of biological role, catalyzes the condensation of the acetyl group of acetyl-CoA with 3-methyl-2-oxobutanoate (2-ketoisovalerate) to form 3-carboxy-3-hydroxy-4-methylpentanoate (2-isopropylmalate). The sequence is that of 2-isopropylmalate synthase from Escherichia coli O81 (strain ED1a).